The primary structure comprises 129 residues: Trefoil factor 2 (129 aa).

Residues Met1–Ala23 form the signal peptide. Pyrrolidone carboxylic acid is present on Gln24. 2 P-type domains span residues Cys29–Leu73 and Glu79–Ile122. 7 disulfide bridges follow: Cys29–Cys127, Cys31–Cys58, Cys42–Cys57, Cys52–Cys69, Cys81–Cys107, Cys91–Cys106, and Cys101–Cys118.

It localises to the secreted. Its function is as follows. Inhibits gastrointestinal motility and gastric acid secretion. Could function as a structural component of gastric mucus, possibly by stabilizing glycoproteins in the mucus gel through interactions with carbohydrate side chains. The chain is Trefoil factor 2 (TFF2) from Canis lupus familiaris (Dog).